A 649-amino-acid polypeptide reads, in one-letter code: Drebrin (649 aa).

Ala2 is subject to N-acetylalanine. The ADF-H domain maps to 3-134 (GVSFSGHRLE…DAGAIGQRLS (132 aa)). Ser141 and Ser142 each carry phosphoserine. Basic and acidic residues-rich tracts occupy residues 208–236 (QERM…EEHR) and 288–298 (DNPREFFKQQE). Disordered stretches follow at residues 208 to 420 (QERM…PAED), 477 to 502 (DLWP…PSGT), and 538 to 620 (EPPA…PPPV). 2 positions are modified to phosphothreonine: Thr331 and Thr335. Positions 334 to 348 (PTRSPSDSSTASTPV) are enriched in polar residues. 3 positions are modified to phosphoserine: Ser337, Ser339, and Ser345. Residue Thr346 is modified to Phosphothreonine. Over residues 363–374 (QPPPLPPPPPPA) the composition is skewed to pro residues. Ser416 carries the phosphoserine modification. Position 497 is a phosphothreonine (Thr497). A compositionally biased stretch (polar residues) spans 582–594 (NGETTQKEGTQAS). The residue at position 601 (Ser601) is a Phosphoserine.

As to quaternary structure, interacts with RUFY3. Interacts with CXCR4; this interaction is enhanced by antigenic stimulation. Interacts (via ADF-H domain) with ZMYND8 (via N-terminus); the interaction leads to sequestering of ZMYND8 in the cytoplasm. As to expression, expressed in the brain, with expression in the molecular layer of the dentate gyrus, stratum pyramidale, and stratum radiatum of the hippocampus (at protein level). Also expressed in the terminal varicosities distributed along dendritic trees of pyramidal cells in CA4 and CA3 of the hippocampus (at protein level). Expressed in pyramidal cells in CA2, CA1 and the subiculum of the hippocampus (at protein level). Expressed in peripheral blood lymphocytes, including T-cells (at protein level). Expressed in the brain. Expressed in the heart, placenta, lung, skeletal muscle, kidney, pancreas, skin fibroblasts, gingival fibroblasts and bone-derived cells.

The protein resides in the cytoplasm. Its subcellular location is the cell projection. It is found in the dendrite. The protein localises to the cell cortex. It localises to the cell junction. The protein resides in the growth cone. Actin cytoskeleton-organizing protein that plays a role in the formation of cell projections. Required for actin polymerization at immunological synapses (IS) and for the recruitment of the chemokine receptor CXCR4 to IS. Plays a role in dendritic spine morphogenesis and organization, including the localization of the dopamine receptor DRD1 to the dendritic spines. Involved in memory-related synaptic plasticity in the hippocampus. The chain is Drebrin (DBN1) from Homo sapiens (Human).